The chain runs to 201 residues: Putative manganese efflux pump MntP 2 (201 aa).

The next 6 helical transmembrane spans lie at 3–23 (LISV…VSIT), 39–59 (IGLF…SIGI), 65–85 (IAAL…GKMI), 116–136 (LILL…SFAF), 141–161 (IINT…IGVM), and 176–196 (ILGG…HTNI).

This sequence belongs to the MntP (TC 9.B.29) family.

The protein resides in the cell membrane. Probably functions as a manganese efflux pump. The polypeptide is Putative manganese efflux pump MntP 2 (Clostridium botulinum (strain Hall / ATCC 3502 / NCTC 13319 / Type A)).